We begin with the raw amino-acid sequence, 299 residues long: GTPase Era (299 aa).

An Era-type G domain is found at 5-172; that stretch reads KSGFVSIIGR…IDVLKTYLPE (168 aa). Residues 13–20 form a G1 region; it reads GRPNVGKS. 13 to 20 is a GTP binding site; it reads GRPNVGKS. A G2 region spans residues 39–43; the sequence is QTTRN. The G3 stretch occupies residues 60-63; that stretch reads DTPG. Residues 60–64 and 122–125 contribute to the GTP site; these read DTPGI and NKID. The segment at 122–125 is G4; the sequence is NKID. Positions 151–153 are G5; the sequence is ISA. The 78-residue stretch at 203-280 folds into the KH type-2 domain; that stretch reads TSEEIPHAIG…YLELWVKVQR (78 aa).

Belongs to the TRAFAC class TrmE-Era-EngA-EngB-Septin-like GTPase superfamily. Era GTPase family. As to quaternary structure, monomer.

Its subcellular location is the cytoplasm. The protein resides in the cell membrane. Functionally, an essential GTPase that binds both GDP and GTP, with rapid nucleotide exchange. Plays a role in 16S rRNA processing and 30S ribosomal subunit biogenesis and possibly also in cell cycle regulation and energy metabolism. The protein is GTPase Era of Staphylococcus aureus (strain Mu3 / ATCC 700698).